The sequence spans 337 residues: Autophagy protein 5 (337 aa).

Lysine 128 participates in a covalent cross-link: Glycyl lysine isopeptide (Lys-Gly) (interchain with G-Cter in ATG12). Residues 271–290 (RAQTSGEERSIDDTEEADGS) form a disordered region. Residues 276-290 (GEERSIDDTEEADGS) show a composition bias toward basic and acidic residues.

The protein belongs to the ATG5 family. Conjugated to ATG12. In terms of processing, conjugated to ATG12; which is essential for autophagy. Conjugation with ATG12 involves ATG7 as an E1-like activating enzyme and ATG10 as an E2-like conjugating enzyme. Ubiquitous.

It localises to the cytoplasm. Required for autophagy. Conjugation to ATG12 is essential for plant nutrient recycling. Involved in a negative feedback loop that modulates NPR1-dependent salicylic acid (SA) signaling and limits senescence and immunity-related programmed cell death (PCD) in plants. Involved in complete proteolysis of chloroplast stroma proteins in senescent leaves. Involved in the degradation of damaged peroxisomes. The sequence is that of Autophagy protein 5 from Arabidopsis thaliana (Mouse-ear cress).